The sequence spans 243 residues: 1-(5-phosphoribosyl)-5-[(5-phosphoribosylamino)methylideneamino] imidazole-4-carboxamide isomerase (243 aa).

D10 acts as the Proton acceptor in catalysis. D128 functions as the Proton donor in the catalytic mechanism.

It belongs to the HisA/HisF family.

The protein resides in the cytoplasm. It catalyses the reaction 1-(5-phospho-beta-D-ribosyl)-5-[(5-phospho-beta-D-ribosylamino)methylideneamino]imidazole-4-carboxamide = 5-[(5-phospho-1-deoxy-D-ribulos-1-ylimino)methylamino]-1-(5-phospho-beta-D-ribosyl)imidazole-4-carboxamide. It participates in amino-acid biosynthesis; L-histidine biosynthesis; L-histidine from 5-phospho-alpha-D-ribose 1-diphosphate: step 4/9. This is 1-(5-phosphoribosyl)-5-[(5-phosphoribosylamino)methylideneamino] imidazole-4-carboxamide isomerase from Helicobacter hepaticus (strain ATCC 51449 / 3B1).